Here is a 290-residue protein sequence, read N- to C-terminus: Porphobilinogen deaminase (290 aa).

At cysteine 238 the chain carries S-(dipyrrolylmethanemethyl)cysteine.

The protein belongs to the HMBS family. Monomer. Dipyrromethane is required as a cofactor.

The enzyme catalyses 4 porphobilinogen + H2O = hydroxymethylbilane + 4 NH4(+). It functions in the pathway porphyrin-containing compound metabolism; protoporphyrin-IX biosynthesis; coproporphyrinogen-III from 5-aminolevulinate: step 2/4. Its function is as follows. Tetrapolymerization of the monopyrrole PBG into the hydroxymethylbilane pre-uroporphyrinogen in several discrete steps. The chain is Porphobilinogen deaminase from Caldicellulosiruptor saccharolyticus (strain ATCC 43494 / DSM 8903 / Tp8T 6331).